A 418-amino-acid chain; its full sequence is Gamma-glutamyl phosphate reductase (418 aa).

The protein belongs to the gamma-glutamyl phosphate reductase family.

It is found in the cytoplasm. It catalyses the reaction L-glutamate 5-semialdehyde + phosphate + NADP(+) = L-glutamyl 5-phosphate + NADPH + H(+). It participates in amino-acid biosynthesis; L-proline biosynthesis; L-glutamate 5-semialdehyde from L-glutamate: step 2/2. Functionally, catalyzes the NADPH-dependent reduction of L-glutamate 5-phosphate into L-glutamate 5-semialdehyde and phosphate. The product spontaneously undergoes cyclization to form 1-pyrroline-5-carboxylate. This chain is Gamma-glutamyl phosphate reductase, found in Thermobifida fusca (strain YX).